A 234-amino-acid polypeptide reads, in one-letter code: Small ribosomal subunit protein uS2 (234 aa).

The protein belongs to the universal ribosomal protein uS2 family.

The protein is Small ribosomal subunit protein uS2 of Prochlorococcus marinus subsp. pastoris (strain CCMP1986 / NIES-2087 / MED4).